Consider the following 2134-residue polypeptide: Genome polyprotein (2134 aa).

The Cytoplasmic portion of the chain corresponds to 1–1377; that stretch reads MSKLFSTVGK…WLFEKIKTSK (1377 aa). Residues 781-882 enclose the LRAT domain; the sequence is IVSCSGEKAK…GDYGTKEGEK (102 aa). Residues His791 and His802 contribute to the active site. Cys863 (acyl-thioester intermediate) is an active-site residue. One can recognise an SF3 helicase domain in the interval 1127-1289; it reads LNKLGRLDKP…EEFSTHAMLD (163 aa). 1153–1160 is an ATP binding site; that stretch reads GNRGGGKS. The stretch at 1378–1392 is an intramembrane region; sequence WYILGCVGAVLSVSV. Residues 1393–2134 are Cytoplasmic-facing; that stretch reads LGVFAYHMIK…VKYRFIDDSF (742 aa). Position 1415 is an O-(5'-phospho-RNA)-tyrosine (Tyr1415). Residues 1431-1643 enclose the Peptidase C3 domain; the sequence is DAQSVVDISN…ITKEMIEEML (213 aa). Active-site for protease 3C activity residues include His1477, Asp1515, and Cys1603. Residues 1880–2001 enclose the RdRp catalytic domain; sequence DLVVGLDFSN…CIKKEYLDQK (122 aa).

This sequence belongs to the picornaviridae polyprotein family. Post-translationally, specific enzymatic cleavages by the viral protease in vivo yield a variety of precursors and mature proteins. During virion maturation, non-infectious particles are rendered infectious following cleavage of VP0. This maturation cleavage is followed by a conformational change of the particle. In terms of processing, VPg is uridylylated by the polymerase and is covalently linked to the 5'-end of genomic RNA. This uridylylated form acts as a nucleotide-peptide primer for the polymerase.

The protein localises to the virion. It localises to the host cytoplasm. The protein resides in the host cytoplasmic vesicle membrane. The catalysed reaction is RNA(n) + a ribonucleoside 5'-triphosphate = RNA(n+1) + diphosphate. It carries out the reaction a ribonucleoside 5'-triphosphate + H2O = a ribonucleoside 5'-diphosphate + phosphate + H(+). The enzyme catalyses Selective cleavage of Gln-|-Gly bond in the poliovirus polyprotein. In other picornavirus reactions Glu may be substituted for Gln, and Ser or Thr for Gly.. Functionally, capsid proteins VP1, VP2, and VP3 form a closed capsid enclosing the viral positive strand RNA genome. All these proteins contain a beta-sheet structure called beta-barrel jelly roll. Together they form an icosahedral capsid (T=3) composed of 60 copies of each VP1, VP2, and VP3, with a diameter of approximately 300 Angstroms. VP1 is situated at the 12 fivefold axes, whereas VP2 and VP3 are located at the quasi-sixfold axes. VP0 precursor is a component of immature procapsids. The N-terminal domain of VP0, protein VP4, is needed for the assembly of 12 pentamers into the icosahedral structure. Unlike other picornaviruses, AEV VP4 may not be myristoylated. Its function is as follows. Protein 2B and 2BC precursor affect membrane integrity and cause an increase in membrane permeability. In terms of biological role, associates with and induces structural rearrangements of intracellular membranes. It displays RNA-binding, nucleotide binding and NTPase activities. Functionally, protein 3A, via its hydrophobic domain, serves as membrane anchor. Protein 3B is covalently linked to the 5'-end of both the positive-strand and negative-strand genomic RNAs. It acts as a genome-linked replication primer. Its function is as follows. Cysteine protease that generates mature viral proteins from the precursor polyprotein. In addition to its proteolytic activity, it binds to viral RNA, and thus influences viral genome replication. RNA and substrate bind cooperatively to the protease. In terms of biological role, RNA-directed RNA polymerase 3D-POL replicates genomic and antigenomic RNA by recognizing replications specific signals. This Avian encephalomyelitis virus (strain Calnek vaccine) (AEV) protein is Genome polyprotein.